The following is a 1641-amino-acid chain: Cortactin-binding protein 2 (1641 aa).

The segment at 1 to 27 is disordered; sequence MATDGASCEPDFSRAPEDAAGAPAEAA. A coiled-coil region spans residues 119–276; the sequence is RKMQERMSTQ…EQLKRGNDSK (158 aa). Disordered regions lie at residues 361–433, 446–472, and 488–588; these read SHGD…HPGL, GSNA…PTSR, and ALSR…PQGN. A compositionally biased stretch (polar residues) spans 385-405; the sequence is GPSTGSTPDLTSSPTALPSTV. R491 carries the asymmetric dimethylarginine modification. Residues 497 to 506 are compositionally biased toward pro residues; the sequence is AGAPPRPGAP. Positions 576 to 586 are enriched in polar residues; the sequence is TVASSPSSLPQ. ANK repeat units lie at residues 702–732, 736–765, 769–798, 802–831, 835–864, and 903–933; these read GRPT…DINY, DGHS…QVNA, NGFT…NINH, GGQT…DRSV, DGWT…PAHG, and EGWT…EPER. The segment at 1442–1468 is disordered; the sequence is AWRKVSTSPRKKSGRFSSPTWNKPDLS. S1512 is subject to Phosphoserine. Residues 1544 to 1641 form a disordered region; it reads LRRFDSSGNN…NSRDLEPTQK (98 aa). Polar residues-rich tracts occupy residues 1551 to 1562 and 1570 to 1579; these read GNNPVFSATVNN and KEVSPLSSHQ. The span at 1580-1590 shows a compositional bias: basic and acidic residues; that stretch reads MTERSNSKSKT. The span at 1612–1626 shows a compositional bias: low complexity; sequence SQNTKRSSSSSNTRQ.

In terms of assembly, interacts with CTTN/cortactin SH3 domain. Interacts with STRN, STRN4/zinedin and MOB4/phocein; this interactions mediate the association with the STRIPAK core complex and may regulate dendritic spine distribution of the STRIPAK complex in hippocampal neurons. Activation of glutamate receptors weakens the interaction with STRN and STRN4.

Its subcellular location is the cytoplasm. It localises to the cell cortex. The protein resides in the cell projection. The protein localises to the dendritic spine. Regulates the dendritic spine distribution of CTTN/cortactin in hippocampal neurons, and thus controls dendritic spinogenesis and dendritic spine maintenance. Associates with the striatin-interacting phosphatase and kinase (STRIPAK) core complex to regulate dendritic spine distribution of the STRIPAK complex in hippocampal neurons. The chain is Cortactin-binding protein 2 (CTTNBP2) from Ovis aries (Sheep).